The chain runs to 105 residues: Iron-sulfur cluster assembly protein CyaY (105 aa).

The protein belongs to the frataxin family.

In terms of biological role, involved in iron-sulfur (Fe-S) cluster assembly. May act as a regulator of Fe-S biogenesis. This Paraburkholderia phymatum (strain DSM 17167 / CIP 108236 / LMG 21445 / STM815) (Burkholderia phymatum) protein is Iron-sulfur cluster assembly protein CyaY.